The chain runs to 159 residues: MSYNITTPSQFVFLSSAWADPLELINLCTNALGNQFQTQQARTVVQRQFSEVWKPSPQVTVRFPDRDFKVYRYNAVLDPLVTALLGAFDTRNRIIEVENQANPTTAETLDATRRVDDATVAIRSAINNLIVELIRGTGSYNRSSFESSSGLVWTSGPAT.

Ser-2 is subject to N-acetylserine; by host.

Belongs to the virgaviridae capsid protein family.

The protein resides in the virion. Capsid protein self-assembles to form rod-shaped virions about 18 nm in diameter with a central canal enclosing the viral genomic RNA. This is Capsid protein (CP) from Tobacco mosaic virus (strain ER) (TMV).